The sequence spans 251 residues: Triosephosphate isomerase (251 aa).

A substrate-binding site is contributed by 9–11 (NWK). Histidine 94 acts as the Electrophile in catalysis. Glutamate 166 acts as the Proton acceptor in catalysis. Substrate contacts are provided by residues glycine 172, serine 211, and 232–233 (GG).

It belongs to the triosephosphate isomerase family. As to quaternary structure, homodimer.

The protein localises to the cytoplasm. It catalyses the reaction D-glyceraldehyde 3-phosphate = dihydroxyacetone phosphate. Its pathway is carbohydrate biosynthesis; gluconeogenesis. It functions in the pathway carbohydrate degradation; glycolysis; D-glyceraldehyde 3-phosphate from glycerone phosphate: step 1/1. Involved in the gluconeogenesis. Catalyzes stereospecifically the conversion of dihydroxyacetone phosphate (DHAP) to D-glyceraldehyde-3-phosphate (G3P). This is Triosephosphate isomerase from Stenotrophomonas maltophilia (strain K279a).